Consider the following 278-residue polypeptide: MSWHGHLQLHYRHDPNEDRTVAHDRHHGPLRVLQRLYPEGPSICHHVLVHPPGGIVGGDTLEVDLDLAPGSHALITTPGATRYYRSAGEVARQQVRARLAEGSRLEWLPLETIAYDACIAENSLRFEIAPGAMMMGWDLLALGLPAAGKPWQRGSYLQQLELPGIWLERARIDAADARLLDSPLGWAGQRVLGTFWLAGGDALPKGLSDALIESARALIGDSALAATAGVSAPHANTVVLRVLAPRVEPAMHLLGAIRAAWRSIAWHLDPCVPRIWRT.

The protein belongs to the UreD family. As to quaternary structure, ureD, UreF and UreG form a complex that acts as a GTP-hydrolysis-dependent molecular chaperone, activating the urease apoprotein by helping to assemble the nickel containing metallocenter of UreC. The UreE protein probably delivers the nickel.

The protein localises to the cytoplasm. In terms of biological role, required for maturation of urease via the functional incorporation of the urease nickel metallocenter. This chain is Urease accessory protein UreD, found in Leptothrix cholodnii (strain ATCC 51168 / LMG 8142 / SP-6) (Leptothrix discophora (strain SP-6)).